The sequence spans 428 residues: Anaerobic glycerol-3-phosphate dehydrogenase subunit B (428 aa).

It belongs to the anaerobic G-3-P dehydrogenase subunit B family. As to quaternary structure, composed of a catalytic GlpA/B dimer and of membrane bound GlpC. The cofactor is FMN.

The catalysed reaction is a quinone + sn-glycerol 3-phosphate = dihydroxyacetone phosphate + a quinol. The protein operates within polyol metabolism; glycerol degradation via glycerol kinase pathway; glycerone phosphate from sn-glycerol 3-phosphate (anaerobic route): step 1/1. In terms of biological role, conversion of glycerol 3-phosphate to dihydroxyacetone. Uses fumarate or nitrate as electron acceptor. In Pasteurella multocida (strain Pm70), this protein is Anaerobic glycerol-3-phosphate dehydrogenase subunit B.